Here is a 440-residue protein sequence, read N- to C-terminus: Deoxyguanosinetriphosphate triphosphohydrolase-like protein (440 aa).

The HD domain occupies 62-255; the sequence is RLTHSLEAAQ…MELADDIAYG (194 aa).

It belongs to the dGTPase family. Type 2 subfamily.

The sequence is that of Deoxyguanosinetriphosphate triphosphohydrolase-like protein from Vibrio parahaemolyticus serotype O3:K6 (strain RIMD 2210633).